The primary structure comprises 143 residues: Transcriptional regulator MraZ (143 aa).

2 consecutive SpoVT-AbrB domains span residues 5-47 and 76-119; these read EYLH…PLDE and ATEC…SQAL.

The protein belongs to the MraZ family. In terms of assembly, forms oligomers.

Its subcellular location is the cytoplasm. It is found in the nucleoid. This chain is Transcriptional regulator MraZ, found in Desulfitobacterium hafniense (strain Y51).